The sequence spans 613 residues: UvrABC system protein C (613 aa).

Residues 29 to 107 enclose the GIY-YIG domain; that stretch reads DVAGVYKMLG…IKTLKPKYNI (79 aa). The 36-residue stretch at 217 to 252 folds into the UVR domain; the sequence is KELQRELFDSMRKFSDNLDYESAMVYRDRLQALKSI.

Belongs to the UvrC family. As to quaternary structure, interacts with UvrB in an incision complex.

The protein resides in the cytoplasm. In terms of biological role, the UvrABC repair system catalyzes the recognition and processing of DNA lesions. UvrC both incises the 5' and 3' sides of the lesion. The N-terminal half is responsible for the 3' incision and the C-terminal half is responsible for the 5' incision. The sequence is that of UvrABC system protein C from Anaplasma marginale (strain St. Maries).